The following is a 243-amino-acid chain: Uridylate kinase (243 aa).

Residue 18–21 (KLGG) participates in ATP binding. G59 serves as a coordination point for UMP. ATP-binding residues include G60 and R64. UMP is bound by residues D79 and 140–147 (MGMPYFST). Positions 173 and 176 each coordinate ATP.

The protein belongs to the UMP kinase family. Homohexamer.

Its subcellular location is the cytoplasm. It catalyses the reaction UMP + ATP = UDP + ADP. The protein operates within pyrimidine metabolism; CTP biosynthesis via de novo pathway; UDP from UMP (UMPK route): step 1/1. Its activity is regulated as follows. Inhibited by UTP. Its function is as follows. Catalyzes the reversible phosphorylation of UMP to UDP. The sequence is that of Uridylate kinase from Corynebacterium glutamicum (strain R).